A 147-amino-acid chain; its full sequence is Protein-export protein SecB (147 aa).

This sequence belongs to the SecB family. In terms of assembly, homotetramer, a dimer of dimers. One homotetramer interacts with 1 SecA dimer.

The protein localises to the cytoplasm. Its function is as follows. One of the proteins required for the normal export of preproteins out of the cell cytoplasm. It is a molecular chaperone that binds to a subset of precursor proteins, maintaining them in a translocation-competent state. It also specifically binds to its receptor SecA. This is Protein-export protein SecB from Neisseria meningitidis serogroup B (strain ATCC BAA-335 / MC58).